We begin with the raw amino-acid sequence, 257 residues long: Alkaline phosphatase synthesis transcriptional regulatory protein SphR (257 aa).

The Response regulatory domain occupies 25 to 148; that stretch reads RILVVEDEAV…ELVARCRALL (124 aa). D83 is subject to 4-aspartylphosphate. A DNA-binding region (ompR/PhoB-type) is located at residues 159–257; the sequence is PAVLRYEGLK…TVRGFGYRLG (99 aa).

Phosphorylated by SphS.

Its function is as follows. Member of the two-component regulatory system SphR/SphS. Response regulator. Involved in inducible production of alkaline phosphatase in response to phosphate limitation as it is directly involved in the regulation of phoA transcription in response to phosphate limitation. Binds to two distinct sites upstream from the phoA promoter. The polypeptide is Alkaline phosphatase synthesis transcriptional regulatory protein SphR (sphR) (Synechococcus elongatus (strain ATCC 33912 / PCC 7942 / FACHB-805) (Anacystis nidulans R2)).